Reading from the N-terminus, the 444-residue chain is Phosphoglucosamine mutase (444 aa).

Ser-102 serves as the catalytic Phosphoserine intermediate. 4 residues coordinate Mg(2+): Ser-102, Asp-241, Asp-243, and Asp-245. A Phosphoserine modification is found at Ser-102.

This sequence belongs to the phosphohexose mutase family. Mg(2+) is required as a cofactor. Post-translationally, activated by phosphorylation.

The enzyme catalyses alpha-D-glucosamine 1-phosphate = D-glucosamine 6-phosphate. Functionally, catalyzes the conversion of glucosamine-6-phosphate to glucosamine-1-phosphate. This is Phosphoglucosamine mutase from Glaesserella parasuis serovar 5 (strain SH0165) (Haemophilus parasuis).